Here is a 284-residue protein sequence, read N- to C-terminus: MKLCDFEVGLDKPFFLIAGTCVIESEQMAIDTAGTLKEITGALGIPFIYKSSFDKANRSSDASFRGLGMEEGLRILSEVRRQVGVPVLTDIHEIDEIKPVAEVVDVLQTPAFLCRQTDFIRACAQSGKPVNIKKGQFLAPHDMKNVIDKARHAARDAGLPEDNFMACERGASFGYNNLVSDMRSLAIMRETGAPVVFDATHSVQLPGGQGTSSGGQREFVPVLARAAIAVGVAGVFMETHPDPACAKSDGPNAVPLRRMKDLLSVLKELDALTKRSGFLENQFD.

Belongs to the KdsA family.

It is found in the cytoplasm. It carries out the reaction D-arabinose 5-phosphate + phosphoenolpyruvate + H2O = 3-deoxy-alpha-D-manno-2-octulosonate-8-phosphate + phosphate. Its pathway is carbohydrate biosynthesis; 3-deoxy-D-manno-octulosonate biosynthesis; 3-deoxy-D-manno-octulosonate from D-ribulose 5-phosphate: step 2/3. The protein operates within bacterial outer membrane biogenesis; lipopolysaccharide biosynthesis. The sequence is that of 2-dehydro-3-deoxyphosphooctonate aldolase from Ralstonia pickettii (strain 12J).